The primary structure comprises 121 residues: MTKQQIQGDRAEEIAFQLLQRKGWVLLDRNWSCRWGELDLVLQKDQRLLVVEVKGRTAQRHDRGGLDAFHSHKRRRLARAINCWRSHHPDAGHQLLQVVLALVNLSGSATRVRWLAIHQLS.

This sequence belongs to the UPF0102 family.

The chain is UPF0102 protein Syncc9902_1284 from Synechococcus sp. (strain CC9902).